We begin with the raw amino-acid sequence, 367 residues long: AA9 family lytic polysaccharide monooxygenase A (367 aa).

An N-terminal signal peptide occupies residues 1 to 20 (MKSSTFGMLALAAAAKLVSA). H21 serves as a coordination point for Cu(2+). The segment at 37–56 (GNSESGYIRSPPSNSPITDV) is disordered. An intrachain disulfide couples C63 to C183. H102 is a binding site for Cu(2+). H169 lines the O2 pocket. Position 180 (Y180) interacts with Cu(2+). Positions 234 to 287 (GASGSSSSPSASASASAPAATSAAPAPSSFTTIAKQPATSSTEAPSTENTSTTS) are disordered. 2 stretches are compositionally biased toward low complexity: residues 235 to 262 (ASGS…APSS) and 270 to 287 (PATS…STTS). N282 is a glycosylation site (N-linked (GlcNAc...) asparagine). One can recognise a CBM1 domain in the interval 329–365 (GAVKEWYQCGGLNYKGSTQCEEGLTCKKWNPYYYQCI).

Belongs to the polysaccharide monooxygenase AA9 family. Cu(2+) is required as a cofactor.

Its subcellular location is the secreted. It carries out the reaction [(1-&gt;4)-beta-D-glucosyl]n+m + reduced acceptor + O2 = 4-dehydro-beta-D-glucosyl-[(1-&gt;4)-beta-D-glucosyl]n-1 + [(1-&gt;4)-beta-D-glucosyl]m + acceptor + H2O.. Lytic polysaccharide monooxygenase (LPMO) that depolymerizes crystalline and amorphous polysaccharides via the oxidation of scissile alpha- or beta-(1-4)-glycosidic bonds, yielding C4 oxidation products. Catalysis by LPMOs requires the reduction of the active-site copper from Cu(II) to Cu(I) by a reducing agent and H(2)O(2) or O(2) as a cosubstrate. Active on cellulose and cello-oligosaccharides, as well as plant cell wall-derived hemicellulosic polysaccharides. Also active on cello-oligosaccharides such as cellohexaose, cellopentaose or cellotetraose. This is AA9 family lytic polysaccharide monooxygenase A from Aspergillus oryzae (strain ATCC 42149 / RIB 40) (Yellow koji mold).